The primary structure comprises 495 residues: Amidophosphoribosyltransferase (495 aa).

Positions 1 to 22 (MFPPSSDLTELNDGQPLSGHHA) are disordered. The propeptide occupies 1 to 28 (MFPPSSDLTELNDGQPLSGHHADKPEEA). Cys29 (nucleophile) is an active-site residue. The Glutamine amidotransferase type-2 domain occupies 29 to 254 (CGVFGIYAPE…AGELVHITES (226 aa)). Cys270 serves as a coordination point for [4Fe-4S] cluster. 3 residues coordinate Mg(2+): Ser317, Asp379, and Asp380. Residues Cys416, Cys467, and Cys470 each coordinate [4Fe-4S] cluster.

The protein in the C-terminal section; belongs to the purine/pyrimidine phosphoribosyltransferase family. Mg(2+) serves as cofactor. It depends on [4Fe-4S] cluster as a cofactor.

The enzyme catalyses 5-phospho-beta-D-ribosylamine + L-glutamate + diphosphate = 5-phospho-alpha-D-ribose 1-diphosphate + L-glutamine + H2O. It functions in the pathway purine metabolism; IMP biosynthesis via de novo pathway; N(1)-(5-phospho-D-ribosyl)glycinamide from 5-phospho-alpha-D-ribose 1-diphosphate: step 1/2. Its function is as follows. Catalyzes the formation of phosphoribosylamine from phosphoribosylpyrophosphate (PRPP) and glutamine. The sequence is that of Amidophosphoribosyltransferase from Synechocystis sp. (strain ATCC 27184 / PCC 6803 / Kazusa).